The sequence spans 60 residues: Cytotoxin 6 (60 aa).

4 disulfide bridges follow: Cys-3/Cys-21, Cys-14/Cys-38, Cys-42/Cys-53, and Cys-54/Cys-59.

This sequence belongs to the three-finger toxin family. Short-chain subfamily. Type IA cytotoxin sub-subfamily. As to quaternary structure, monomer in solution; Homodimer and oligomer in the presence of negatively charged lipids forming a pore with a size ranging between 20 and 30 Angstroms. Expressed by the venom gland.

The protein resides in the secreted. Its subcellular location is the target cell membrane. Functionally, shows cytolytic activity on many different cells by forming pore in lipid membranes. In vivo, increases heart rate or kills the animal by cardiac arrest. In addition, it binds to heparin with high affinity, interacts with Kv channel-interacting protein 1 (KCNIP1) in a calcium-independent manner, and binds to integrin alpha-V/beta-3 (ITGAV/ITGB3) with moderate affinity. The chain is Cytotoxin 6 from Naja annulifera (Banded Egyptian cobra).